Reading from the N-terminus, the 453-residue chain is Armadillo repeat-containing X-linked protein 1 (453 aa).

The Mitochondrial intermembrane portion of the chain corresponds to 1 to 6; the sequence is MGRTRE. 2 mitochondrion outer membrane (MOM)-targeting sequence regions span residues 1 to 6 and 26 to 36; these read MGRTRE and RLAWGRDENEK. The chain crosses the membrane as a helical; Signal-anchor span at residues 7–29; it reads AGCVAAGVVIGAGACYCVYRLAW. Topologically, residues 30 to 453 are cytoplasmic; the sequence is GRDENEKIWD…VKVLKVLTKL (424 aa). The tract at residues 140-182 is disordered; it reads PSLPCPGGRGGGCHPTRSGSRAGGRASGKSKGKARSKSTRAPA. Over residues 167 to 177 the composition is skewed to basic residues; that stretch reads GKSKGKARSKS. 4 ARM repeats span residues 195–235, 237–276, 358–398, and 415–453; these read PYKI…NNAA, SFNQ…NLSV, PAMT…NIND, and SSLF…LTKL.

It belongs to the eutherian X-chromosome-specific Armcx family. As to quaternary structure, interacts with MIRO1.

Its subcellular location is the mitochondrion. The protein resides in the mitochondrion outer membrane. Functionally, regulates mitochondrial transport during axon regeneration. Increases the proportion of motile mitochondria by recruiting stationary mitochondria into the motile pool. Enhances mitochondria movement and neurite growth in both adult axons and embryonic neurons. Promotes neuronal survival and axon regeneration after nerve injury. May link mitochondria to the Trak1-kinesin motor complex via its interaction with MIRO1. The chain is Armadillo repeat-containing X-linked protein 1 (ARMCX1) from Pongo abelii (Sumatran orangutan).